Here is a 64-residue protein sequence, read N- to C-terminus: Translational regulator CsrA (64 aa).

This sequence belongs to the CsrA/RsmA family. As to quaternary structure, homodimer; the beta-strands of each monomer intercalate to form a hydrophobic core, while the alpha-helices form wings that extend away from the core.

It localises to the cytoplasm. In terms of biological role, a key translational regulator that binds mRNA to regulate translation initiation and/or mRNA stability. Mediates global changes in gene expression, shifting from rapid growth to stress survival by linking envelope stress, the stringent response and the catabolite repression systems. Usually binds in the 5'-UTR; binding at or near the Shine-Dalgarno sequence prevents ribosome-binding, repressing translation, binding elsewhere in the 5'-UTR can activate translation and/or stabilize the mRNA. Its function is antagonized by small RNA(s). This Actinobacillus pleuropneumoniae serotype 5b (strain L20) protein is Translational regulator CsrA.